The following is a 220-amino-acid chain: Exodeoxyribonuclease 10 (220 aa).

Mg(2+) serves as cofactor.

In terms of biological role, capable of degrading both single-strand and double-strand DNA with 3' to 5' polarity. Has higher affinity for ssDNA ends than for dsDNA. The polypeptide is Exodeoxyribonuclease 10 (exoX) (Escherichia coli O6:H1 (strain CFT073 / ATCC 700928 / UPEC)).